The chain runs to 366 residues: Chorismate synthase (366 aa).

NADP(+) is bound by residues Arg48 and Arg54. Residues 125–127 (RSS), 238–239 (NA), Gly278, 293–297 (KPTSS), and Arg319 contribute to the FMN site.

It belongs to the chorismate synthase family. In terms of assembly, homotetramer. It depends on FMNH2 as a cofactor.

The catalysed reaction is 5-O-(1-carboxyvinyl)-3-phosphoshikimate = chorismate + phosphate. Its pathway is metabolic intermediate biosynthesis; chorismate biosynthesis; chorismate from D-erythrose 4-phosphate and phosphoenolpyruvate: step 7/7. Functionally, catalyzes the anti-1,4-elimination of the C-3 phosphate and the C-6 proR hydrogen from 5-enolpyruvylshikimate-3-phosphate (EPSP) to yield chorismate, which is the branch point compound that serves as the starting substrate for the three terminal pathways of aromatic amino acid biosynthesis. This reaction introduces a second double bond into the aromatic ring system. The chain is Chorismate synthase from Burkholderia multivorans (strain ATCC 17616 / 249).